The chain runs to 482 residues: Serine carboxypeptidase-like 26 (482 aa).

The N-terminal stretch at 1–28 (MAVAAAAAARRRDVSCLLLLLCFSSSMA) is a signal peptide. 3 disulfides stabilise this stretch: Cys-101-Cys-366, Cys-263-Cys-274, and Cys-298-Cys-333. An N-linked (GlcNAc...) asparagine glycan is attached at Asn-152. The active site involves Ser-194. N-linked (GlcNAc...) asparagine glycosylation is found at Asn-269, Asn-301, Asn-354, and Asn-375. Catalysis depends on residues Asp-403 and His-455.

The protein belongs to the peptidase S10 family.

The protein resides in the secreted. Acts as a positive regulator of grain size by controlling grain width, filling and weight. High expression of GS5 in the grain is correlated with large grain size. The protein is Serine carboxypeptidase-like 26 of Oryza sativa subsp. japonica (Rice).